The chain runs to 274 residues: ATP synthase subunit delta (274 aa).

Belongs to the ATPase delta chain family. As to quaternary structure, F-type ATPases have 2 components, F(1) - the catalytic core - and F(0) - the membrane proton channel. F(1) has five subunits: alpha(3), beta(3), gamma(1), delta(1), epsilon(1). F(0) has three main subunits: a(1), b(2) and c(10-14). The alpha and beta chains form an alternating ring which encloses part of the gamma chain. F(1) is attached to F(0) by a central stalk formed by the gamma and epsilon chains, while a peripheral stalk is formed by the delta and b chains.

Its subcellular location is the cell membrane. Its function is as follows. F(1)F(0) ATP synthase produces ATP from ADP in the presence of a proton or sodium gradient. F-type ATPases consist of two structural domains, F(1) containing the extramembraneous catalytic core and F(0) containing the membrane proton channel, linked together by a central stalk and a peripheral stalk. During catalysis, ATP synthesis in the catalytic domain of F(1) is coupled via a rotary mechanism of the central stalk subunits to proton translocation. In terms of biological role, this protein is part of the stalk that links CF(0) to CF(1). It either transmits conformational changes from CF(0) to CF(1) or is implicated in proton conduction. The chain is ATP synthase subunit delta from Streptomyces coelicolor (strain ATCC BAA-471 / A3(2) / M145).